A 41-amino-acid polypeptide reads, in one-letter code: Large ribosomal subunit protein bL36 (41 aa).

Belongs to the bacterial ribosomal protein bL36 family.

The chain is Large ribosomal subunit protein bL36 from Opitutus terrae (strain DSM 11246 / JCM 15787 / PB90-1).